A 74-amino-acid chain; its full sequence is Small cysteine-rich protein 8 (74 aa).

A signal peptide spans 1 to 21 (MAAKFHLCLLLIILGTITVQG). The propeptide occupies 22–31 (ARHPGKPHFF).

Belongs to the Cnidaria small cysteine-rich protein (SCRiP) family. beta subfamily. Post-translationally, contains 4 disulfide bonds.

The protein resides in the secreted. The protein localises to the nematocyst. Induces neurotoxic symptoms on zebrafish. Has also been claimed to be implied in calcification, but tests on homolog proteins suggest that proteins of this family have a neurotoxic function and not a calcification function. The polypeptide is Small cysteine-rich protein 8 (Orbicella faveolata (Mountainous star coral)).